A 138-amino-acid polypeptide reads, in one-letter code: ATP synthase epsilon chain (138 aa).

The protein belongs to the ATPase epsilon chain family. In terms of assembly, F-type ATPases have 2 components, CF(1) - the catalytic core - and CF(0) - the membrane proton channel. CF(1) has five subunits: alpha(3), beta(3), gamma(1), delta(1), epsilon(1). CF(0) has three main subunits: a, b and c.

It is found in the cell inner membrane. In terms of biological role, produces ATP from ADP in the presence of a proton gradient across the membrane. This is ATP synthase epsilon chain from Psychrobacter sp. (strain PRwf-1).